Consider the following 251-residue polypeptide: Orotidine 5'-phosphate decarboxylase (251 aa).

Substrate contacts are provided by residues D19, K42, 69-78 (DLKFHDIPNT), T133, R194, Q204, G224, and R225. The active-site Proton donor is K71.

It belongs to the OMP decarboxylase family. Type 1 subfamily. In terms of assembly, homodimer.

It carries out the reaction orotidine 5'-phosphate + H(+) = UMP + CO2. Its pathway is pyrimidine metabolism; UMP biosynthesis via de novo pathway; UMP from orotate: step 2/2. Its function is as follows. Catalyzes the decarboxylation of orotidine 5'-monophosphate (OMP) to uridine 5'-monophosphate (UMP). The chain is Orotidine 5'-phosphate decarboxylase from Syntrophus aciditrophicus (strain SB).